The primary structure comprises 330 residues: Aspartate--ammonia ligase (330 aa).

The protein belongs to the class-II aminoacyl-tRNA synthetase family. AsnA subfamily.

The protein localises to the cytoplasm. The catalysed reaction is L-aspartate + NH4(+) + ATP = L-asparagine + AMP + diphosphate + H(+). It functions in the pathway amino-acid biosynthesis; L-asparagine biosynthesis; L-asparagine from L-aspartate (ammonia route): step 1/1. This is Aspartate--ammonia ligase from Shigella dysenteriae serotype 1 (strain Sd197).